Here is a 204-residue protein sequence, read N- to C-terminus: Leucyl/phenylalanyl-tRNA--protein transferase (204 aa).

This sequence belongs to the L/F-transferase family.

Its subcellular location is the cytoplasm. The catalysed reaction is N-terminal L-lysyl-[protein] + L-leucyl-tRNA(Leu) = N-terminal L-leucyl-L-lysyl-[protein] + tRNA(Leu) + H(+). It catalyses the reaction N-terminal L-arginyl-[protein] + L-leucyl-tRNA(Leu) = N-terminal L-leucyl-L-arginyl-[protein] + tRNA(Leu) + H(+). The enzyme catalyses L-phenylalanyl-tRNA(Phe) + an N-terminal L-alpha-aminoacyl-[protein] = an N-terminal L-phenylalanyl-L-alpha-aminoacyl-[protein] + tRNA(Phe). In terms of biological role, functions in the N-end rule pathway of protein degradation where it conjugates Leu, Phe and, less efficiently, Met from aminoacyl-tRNAs to the N-termini of proteins containing an N-terminal arginine or lysine. The sequence is that of Leucyl/phenylalanyl-tRNA--protein transferase from Rhizobium leguminosarum bv. trifolii (strain WSM2304).